A 639-amino-acid polypeptide reads, in one-letter code: Sec1 family domain-containing protein 1 (639 aa).

Phosphoserine is present on residues Ser-34, Ser-300, and Ser-525.

The protein belongs to the STXBP/unc-18/SEC1 family. As to quaternary structure, interacts with STX17. Interacts with STX5A. Interacts with the COG complex via COG4.

The protein localises to the cytoplasm. It is found in the endoplasmic reticulum membrane. Its subcellular location is the golgi apparatus. The protein resides in the golgi stack membrane. Plays a role in SNARE-pin assembly and Golgi-to-ER retrograde transport via its interaction with COG4. Involved in vesicular transport between the endoplasmic reticulum and the Golgi. The polypeptide is Sec1 family domain-containing protein 1 (Scfd1) (Mus musculus (Mouse)).